A 242-amino-acid polypeptide reads, in one-letter code: Ras-like protein family member 11A (242 aa).

The interval 17-241 (ESSSDYLLPK…SPKVKAPSAL (225 aa)) is small GTPase-like. GTP-binding positions include 34–41 (GAGRVGKS), 81–85 (DTPGG), and 147–150 (NKGD).

This sequence belongs to the small GTPase superfamily. Ras family. In terms of assembly, interacts with UBF/UBTF. As to expression, widely expressed. Down-regulated in prostate tumors compared to normal prostate tissue. High levels found in colon tumor and normal colon tissue followed by small intestine, liver, jejunum, ileum, bladder and aorta. Lowest levels observed in endothelial cells.

It is found in the nucleus. The protein resides in the nucleolus. It catalyses the reaction GTP + H2O = GDP + phosphate + H(+). Its function is as follows. Regulator of rDNA transcription. Acts in cooperation UBF/UBTF and positively regulates RNA polymerase I transcription. In Homo sapiens (Human), this protein is Ras-like protein family member 11A.